Reading from the N-terminus, the 397-residue chain is Acetate kinase (397 aa).

N7 provides a ligand contact to Mg(2+). An ATP-binding site is contributed by K14. R90 contacts substrate. The Proton donor/acceptor role is filled by D147. ATP-binding positions include 207–211 (HLGNG), 282–284 (DFR), and 330–334 (GLGEN). Position 383 (E383) interacts with Mg(2+).

This sequence belongs to the acetokinase family. Homodimer. Mg(2+) is required as a cofactor. Requires Mn(2+) as cofactor.

Its subcellular location is the cytoplasm. It catalyses the reaction acetate + ATP = acetyl phosphate + ADP. It participates in metabolic intermediate biosynthesis; acetyl-CoA biosynthesis; acetyl-CoA from acetate: step 1/2. In terms of biological role, catalyzes the formation of acetyl phosphate from acetate and ATP. Can also catalyze the reverse reaction. This chain is Acetate kinase, found in Clostridium botulinum (strain 657 / Type Ba4).